The primary structure comprises 64 residues: Large ribosomal subunit protein bL33 (64 aa).

It belongs to the bacterial ribosomal protein bL33 family.

This Picosynechococcus sp. (strain ATCC 27264 / PCC 7002 / PR-6) (Agmenellum quadruplicatum) protein is Large ribosomal subunit protein bL33.